A 432-amino-acid polypeptide reads, in one-letter code: Adenylosuccinate synthetase (432 aa).

GTP contacts are provided by residues 13–19 and 41–43; these read GDEGKGK and GHT. Catalysis depends on Asp-14, which acts as the Proton acceptor. 2 residues coordinate Mg(2+): Asp-14 and Gly-41. IMP-binding positions include 14–17, 39–42, Thr-130, Arg-144, Gln-225, Thr-240, and Arg-304; these read DEGK and NAGH. Catalysis depends on His-42, which acts as the Proton donor. 300–306 serves as a coordination point for substrate; it reads ATTGRRR. Residues Arg-306, 332–334, and 415–417 each bind GTP; these read KLD and STG.

This sequence belongs to the adenylosuccinate synthetase family. In terms of assembly, homodimer. Requires Mg(2+) as cofactor.

The protein resides in the cytoplasm. It carries out the reaction IMP + L-aspartate + GTP = N(6)-(1,2-dicarboxyethyl)-AMP + GDP + phosphate + 2 H(+). It functions in the pathway purine metabolism; AMP biosynthesis via de novo pathway; AMP from IMP: step 1/2. In terms of biological role, plays an important role in the de novo pathway of purine nucleotide biosynthesis. Catalyzes the first committed step in the biosynthesis of AMP from IMP. The protein is Adenylosuccinate synthetase of Shigella flexneri serotype 5b (strain 8401).